We begin with the raw amino-acid sequence, 243 residues long: DNA repair protein RecO (243 aa).

It belongs to the RecO family.

Functionally, involved in DNA repair and RecF pathway recombination. The polypeptide is DNA repair protein RecO (Azoarcus sp. (strain BH72)).